The primary structure comprises 115 residues: Ribonuclease P protein component (115 aa).

The protein belongs to the RnpA family. As to quaternary structure, consists of a catalytic RNA component (M1 or rnpB) and a protein subunit.

The catalysed reaction is Endonucleolytic cleavage of RNA, removing 5'-extranucleotides from tRNA precursor.. Its function is as follows. RNaseP catalyzes the removal of the 5'-leader sequence from pre-tRNA to produce the mature 5'-terminus. It can also cleave other RNA substrates such as 4.5S RNA. The protein component plays an auxiliary but essential role in vivo by binding to the 5'-leader sequence and broadening the substrate specificity of the ribozyme. The sequence is that of Ribonuclease P protein component from Bacillus cereus (strain 03BB102).